Reading from the N-terminus, the 368-residue chain is Xaa-Pro dipeptidase (368 aa).

Mn(2+)-binding residues include aspartate 223, aspartate 234, histidine 298, glutamate 327, and glutamate 341.

Belongs to the peptidase M24B family. Mn(2+) is required as a cofactor.

Its subcellular location is the cytoplasm. The catalysed reaction is Xaa-L-Pro dipeptide + H2O = an L-alpha-amino acid + L-proline. The chain is Xaa-Pro dipeptidase (pepQ) from Lactobacillus helveticus (Lactobacillus suntoryeus).